Here is a 640-residue protein sequence, read N- to C-terminus: MSQEPATPLLDTVKTPDDLRKLAPTQLRQLADELRVEMISAVGQTGGHLGSGLGVVELTVAIHYVFNTPEDRLVWDVGHQAYPHKILTGRRDRIRTLRQAGGLSGFTKRSESEYDPFGTAHSSTSISAALGFAIANKLSGRLGKGIAVIGDGAMSAGMAYEAMNNAEAAGNRLIVILNDNDMSIAPPVGGLSAYLARLVSSGPFLGLRDIARRLSRKLPRPLHEAARKTDEFARGMAMGGTLFEELGFYYVGPIDGHNIDQLIPVLENVRDAAEGPCLIHVVTQKGKGYAPAEAAADKYHGVQKFDVITGEQVKAKAAAPAYQNVFGETLAKLADADPTICAITAAMPSGTGVDKFAKAHPDRTFDVGIAEQHAVTFAAGLAAEGMRPFCAIYSTFLQRAFDQVVHDVAIQNLPVRFAIDRAGLVGADGATHAGSFDVTYLATLPNLVVMAAADEAELVHMTYTAALHDSGPIAFRYPRGNGVGVPLPEVPERLEIGKGRIIRQGSKVALLSLGTRLAEALKAADQLDARGLSTTVADLRFAKPLDVALIRQLMTTHDVIVTVEEGSIGGLGAHVLTMASDEGLVDGGLKIRTMRLPDLFQDHDAPEKQYDEAGLNAPHIVDTVLKALRHNSAGVSEARA.

Thiamine diphosphate contacts are provided by residues histidine 79 and 120-122 (AHS). Aspartate 151 is a Mg(2+) binding site. Thiamine diphosphate contacts are provided by residues 152–153 (GA), asparagine 180, tyrosine 289, and glutamate 371. Asparagine 180 is a binding site for Mg(2+).

It belongs to the transketolase family. DXPS subfamily. Homodimer. The cofactor is Mg(2+). Thiamine diphosphate is required as a cofactor.

It carries out the reaction D-glyceraldehyde 3-phosphate + pyruvate + H(+) = 1-deoxy-D-xylulose 5-phosphate + CO2. It participates in metabolic intermediate biosynthesis; 1-deoxy-D-xylulose 5-phosphate biosynthesis; 1-deoxy-D-xylulose 5-phosphate from D-glyceraldehyde 3-phosphate and pyruvate: step 1/1. Its function is as follows. Catalyzes the acyloin condensation reaction between C atoms 2 and 3 of pyruvate and glyceraldehyde 3-phosphate to yield 1-deoxy-D-xylulose-5-phosphate (DXP). This Novosphingobium aromaticivorans (strain ATCC 700278 / DSM 12444 / CCUG 56034 / CIP 105152 / NBRC 16084 / F199) protein is 1-deoxy-D-xylulose-5-phosphate synthase.